Reading from the N-terminus, the 503-residue chain is tRNA-guanine(15) transglycosylase (503 aa).

Aspartate 86 acts as the Nucleophile in catalysis. Residue aspartate 121 participates in substrate binding. Residues cysteine 278, cysteine 280, and cysteine 283 each contribute to the Zn(2+) site.

The protein belongs to the archaeosine tRNA-ribosyltransferase family. It depends on Zn(2+) as a cofactor.

The enzyme catalyses guanosine(15) in tRNA + 7-cyano-7-deazaguanine = 7-cyano-7-carbaguanosine(15) in tRNA + guanine. It participates in tRNA modification; archaeosine-tRNA biosynthesis. Functionally, exchanges the guanine residue with 7-cyano-7-deazaguanine (preQ0) at position 15 in the dihydrouridine loop (D-loop) of archaeal tRNAs. This Saccharolobus solfataricus (strain ATCC 35092 / DSM 1617 / JCM 11322 / P2) (Sulfolobus solfataricus) protein is tRNA-guanine(15) transglycosylase.